The sequence spans 294 residues: UDP-3-O-acyl-N-acetylglucosamine deacetylase (294 aa).

H75, H232, and D236 together coordinate Zn(2+). The Proton donor role is filled by H259.

Belongs to the LpxC family. Requires Zn(2+) as cofactor.

The enzyme catalyses a UDP-3-O-[(3R)-3-hydroxyacyl]-N-acetyl-alpha-D-glucosamine + H2O = a UDP-3-O-[(3R)-3-hydroxyacyl]-alpha-D-glucosamine + acetate. Its pathway is glycolipid biosynthesis; lipid IV(A) biosynthesis; lipid IV(A) from (3R)-3-hydroxytetradecanoyl-[acyl-carrier-protein] and UDP-N-acetyl-alpha-D-glucosamine: step 2/6. In terms of biological role, catalyzes the hydrolysis of UDP-3-O-myristoyl-N-acetylglucosamine to form UDP-3-O-myristoylglucosamine and acetate, the committed step in lipid A biosynthesis. The chain is UDP-3-O-acyl-N-acetylglucosamine deacetylase from Campylobacter curvus (strain 525.92).